We begin with the raw amino-acid sequence, 88 residues long: Small ribosomal subunit protein uS15 (88 aa).

The protein belongs to the universal ribosomal protein uS15 family. As to quaternary structure, part of the 30S ribosomal subunit. Forms a bridge to the 50S subunit in the 70S ribosome, contacting the 23S rRNA.

In terms of biological role, one of the primary rRNA binding proteins, it binds directly to 16S rRNA where it helps nucleate assembly of the platform of the 30S subunit by binding and bridging several RNA helices of the 16S rRNA. Its function is as follows. Forms an intersubunit bridge (bridge B4) with the 23S rRNA of the 50S subunit in the ribosome. In Pelobacter propionicus (strain DSM 2379 / NBRC 103807 / OttBd1), this protein is Small ribosomal subunit protein uS15.